Here is a 379-residue protein sequence, read N- to C-terminus: Homoserine O-succinyltransferase (379 aa).

The 310-residue stretch at 51 to 360 (NAVLICHALS…DAPQGHDAFL (310 aa)) folds into the AB hydrolase-1 domain. Ser157 serves as the catalytic Nucleophile. Arg227 lines the substrate pocket. Active-site residues include Asp323 and His356. Asp357 serves as a coordination point for substrate.

It belongs to the AB hydrolase superfamily. MetX family. In terms of assembly, homodimer.

The protein resides in the cytoplasm. It carries out the reaction L-homoserine + succinyl-CoA = O-succinyl-L-homoserine + CoA. The protein operates within amino-acid biosynthesis; L-methionine biosynthesis via de novo pathway; O-succinyl-L-homoserine from L-homoserine: step 1/1. Transfers a succinyl group from succinyl-CoA to L-homoserine, forming succinyl-L-homoserine. The polypeptide is Homoserine O-succinyltransferase (Pseudomonas savastanoi pv. phaseolicola (strain 1448A / Race 6) (Pseudomonas syringae pv. phaseolicola (strain 1448A / Race 6))).